Here is a 166-residue protein sequence, read N- to C-terminus: Regulatory protein RecX (166 aa).

The protein belongs to the RecX family.

It localises to the cytoplasm. Modulates RecA activity. The protein is Regulatory protein RecX of Escherichia coli (strain SMS-3-5 / SECEC).